Reading from the N-terminus, the 82-residue chain is MVTIRLTRGGVKKRPFYQVVVTDSRSPRDGCFLEKVGFFNPTAQGQAERLRLDTDRINHWVGLGAQLSDRVAKLVKDNAVAA.

It belongs to the bacterial ribosomal protein bS16 family.

This chain is Small ribosomal subunit protein bS16, found in Psychromonas ingrahamii (strain DSM 17664 / CCUG 51855 / 37).